Reading from the N-terminus, the 409-residue chain is MKGPAFSKPLKDKINPWGPLIVLGILIRAGVSVQHDSPHQVFNVTWRVTNLMTGQTANATSLLGTMTDAFPMLHFDLCDLIGDDWDETGLECRTPGGRKRARTFDFYVCPGHTVPTGCGGPREGYCGKWGCETTGQAYWKPSSSWDLISLKRGNTPKDRGPCYDSSVSSGVQGATPGGRCNPLVLKFTDAGKKASWDSPKVWGLRLYRPTGIDPVTRFSLTRQVLNIGPRIPIGPNPVIIGQLPPSRPVQVRLPRPPQPPPTGAASMVPGTAPPSQQPGTGDRLLNLVQGAYQALNLTNPDKTQECWLCLVSGPPYYEGVAVLGTNSNHTSALKEKCCFYADHTGLVRDSMAKLRKRLTQRQKLFESSQGWFEGSFNRSPWFTTLISTIMGLLIILLLLLILLLWTLHS.

Residues methionine 1–serine 32 form the signal peptide. The Virion surface segment spans residues valine 33–threonine 384. Residues asparagine 43 and asparagine 58 are each glycosylated (N-linked (GlcNAc...) asparagine; by host). Positions proline 254–threonine 280 are disordered. N-linked (GlcNAc...) asparagine; by host glycosylation is found at asparagine 296 and asparagine 328. Residues leucine 385–tryptophan 405 form a helical membrane-spanning segment. Over threonine 406–serine 409 the chain is Intravirion.

As to quaternary structure, homooligomer. Forms heterooligomers with mouse EPOR, probably via their respective transmembrane domains. Forms covalent heterodimers with mouse MST1R isoform sf-Stk, probably via disulfide bonds.

It localises to the host endoplasmic reticulum membrane. Its subcellular location is the host cell membrane. The protein localises to the virion membrane. In terms of biological role, this envelope-like membrane glycoprotein is responsible for ligand-independent activation of the erythropoietin receptor EPOR leading to the abnormally rapid proliferation of erythroid precursor cells. In the first stage of Friend disease, constitutive activation of EPOR by gp55 causes uncontrolled, polyclonal proliferation of infected erythroblasts, leading to polycythemia (massive increase in the number of mature red cells). Host susceptibility to SSFV-induced erythroblastosis depends on the expression of the truncated isoform of MST1R receptor tyrosine kinase (MST1R isoform sf-Stk). Interaction with SSFV gp 55 results in constitutive tyrosine phosphorylation and activation of MST1R isoform sf-Stk. This Mus musculus (Mouse) protein is Glycoprotein 55 (env).